The primary structure comprises 161 residues: Eukaryotic translation initiation factor 5A-1 (161 aa).

Residues 1 to 12 (MSDEEHQFESKA) are compositionally biased toward basic and acidic residues. The interval 1–21 (MSDEEHQFESKADAGASKTYP) is disordered. Position 52 is a hypusine (Lys-52).

The protein belongs to the eIF-5A family. Post-translationally, lys-52 undergoes hypusination, a unique post-translational modification that consists in the addition of a butylamino group from spermidine to lysine side chain, leading to the formation of the unusual amino acid hypusine. eIF-5As are the only known proteins to undergo this modification, which is essential for their function.

Translation factor that promotes translation elongation and termination, particularly upon ribosome stalling at specific amino acid sequence contexts. Binds between the exit (E) and peptidyl (P) site of the ribosome and promotes rescue of stalled ribosome: specifically required for efficient translation of polyproline-containing peptides as well as other motifs that stall the ribosome. Acts as a ribosome quality control (RQC) cofactor by joining the RQC complex to facilitate peptidyl transfer during CAT tailing step. The chain is Eukaryotic translation initiation factor 5A-1 from Medicago sativa (Alfalfa).